The sequence spans 274 residues: 3-methyl-2-oxobutanoate hydroxymethyltransferase (274 aa).

Mg(2+) contacts are provided by Asp-44 and Asp-83. Residues 44–45, Asp-83, and Lys-113 each bind 3-methyl-2-oxobutanoate; that span reads DS. Residue Glu-115 participates in Mg(2+) binding. Residue Glu-182 is the Proton acceptor of the active site.

This sequence belongs to the PanB family. In terms of assembly, homodecamer; pentamer of dimers. Mg(2+) serves as cofactor.

Its subcellular location is the cytoplasm. The catalysed reaction is 3-methyl-2-oxobutanoate + (6R)-5,10-methylene-5,6,7,8-tetrahydrofolate + H2O = 2-dehydropantoate + (6S)-5,6,7,8-tetrahydrofolate. The protein operates within cofactor biosynthesis; (R)-pantothenate biosynthesis; (R)-pantoate from 3-methyl-2-oxobutanoate: step 1/2. Catalyzes the reversible reaction in which hydroxymethyl group from 5,10-methylenetetrahydrofolate is transferred onto alpha-ketoisovalerate to form ketopantoate. The chain is 3-methyl-2-oxobutanoate hydroxymethyltransferase from Campylobacter jejuni subsp. jejuni serotype O:6 (strain 81116 / NCTC 11828).